A 164-amino-acid chain; its full sequence is HTH-type transcriptional regulator IscR (164 aa).

Residues 2–131 (RLTSKGRYAV…NNITLGELVN (130 aa)) enclose the HTH rrf2-type domain. Positions 28–51 (LADISERQGISLSYLEQLFSRLRK) form a DNA-binding region, H-T-H motif. Residues Cys-92, Cys-98, and Cys-104 each contribute to the [2Fe-2S] cluster site.

Requires [2Fe-2S] cluster as cofactor.

Functionally, regulates the transcription of several operons and genes involved in the biogenesis of Fe-S clusters and Fe-S-containing proteins. In Salmonella choleraesuis (strain SC-B67), this protein is HTH-type transcriptional regulator IscR.